Reading from the N-terminus, the 582-residue chain is Vesicular glutamate transporter 2 (582 aa).

Over 1–71 (MESVKQRILA…CTCFGLPRRY (71 aa)) the chain is Cytoplasmic. Residues 72–92 (IIAIMSGLGFCISFGIRCNLG) traverse the membrane as a helical segment. The Vesicular segment spans residues 93–125 (VAIVDMVNNSTIHRGGKVIKEKAKFNWDPETVG). N-linked (GlcNAc...) asparagine glycans are attached at residues Asn-100 and Asn-101. A helical membrane pass occupies residues 126-146 (MIHGSFFWGYIITQIPGGYIA). The Cytoplasmic portion of the chain corresponds to 147-148 (SR). Residues 149–169 (LAANRVFGAAILLTSTLNMLI) form a helical membrane-spanning segment. Residues 170–177 (PSAARVHY) are Vesicular-facing. A helical membrane pass occupies residues 178 to 198 (GCVIFVRILQGLVEGVTYPAC). Topologically, residues 199–216 (HGIWSKWAPPLERSRLAT) are cytoplasmic. The helical transmembrane segment at 217 to 237 (TSFCGSYAGAVIAMPLAGILV) threads the bilayer. Residues 238-244 (QYTGWSS) are Vesicular-facing. Residues 245–265 (VFYVYGSFGMVWYMFWLLVSY) form a helical membrane-spanning segment. The Cytoplasmic segment spans residues 266-310 (ESPAKHPTITDEERRYIEESIGESANLLGAMEKFKTPWRKFFTSM). A helical transmembrane segment spans residues 311–331 (PVYAIIVANFCRSWTFYLLLI). At 332–349 (SQPAYFEEVFGFEISKVG) the chain is on the vesicular side. Residues 350–370 (MLSAVPHLVMTIIVPIGGQIA) form a helical membrane-spanning segment. Over 371 to 386 (DFLRSKQILSTTTVRK) the chain is Cytoplasmic. A helical transmembrane segment spans residues 387-407 (IMNCGGFGMEATLLLVVGYSH). Over 408-409 (TR) the chain is Vesicular. The helical transmembrane segment at 410–430 (GVAISFLVLAVGFSGFAISGF) threads the bilayer. Topologically, residues 431 to 443 (NVNHLDIAPRYAS) are cytoplasmic. The chain crosses the membrane as a helical span at residues 444–464 (ILMGISDGVGTLSGMVCPIIV). At 465 to 477 (GAMTKNKSREEWQ) the chain is on the vesicular side. The N-linked (GlcNAc...) asparagine glycan is linked to Asn-470. A helical transmembrane segment spans residues 478–498 (YVFLIAALVHYGGVIFYALFA). Residues 499–582 (SGEKQPWADP…YTYKDRDDYS (84 aa)) lie on the Cytoplasmic side of the membrane.

Belongs to the major facilitator superfamily. Sodium/anion cotransporter family. VGLUT subfamily. Expressed in brain. Expressed in hippocampal neurons (at protein level).

The protein localises to the cytoplasmic vesicle. It localises to the secretory vesicle. The protein resides in the synaptic vesicle membrane. Its subcellular location is the synapse. It is found in the synaptosome. The protein localises to the cell membrane. The catalysed reaction is L-glutamate(out) = L-glutamate(in). It carries out the reaction K(+)(in) + H(+)(out) = K(+)(out) + H(+)(in). It catalyses the reaction 3 Na(+)(out) + phosphate(out) = 3 Na(+)(in) + phosphate(in). The enzyme catalyses phosphate(in) = phosphate(out). The catalysed reaction is chloride(in) = chloride(out). Its activity is regulated as follows. Chloride channel activity is allosterically activated by lumenal H(+) and Cl(-) leading to synaptic vesicles acidification. The L-glutamate transport activity is allosterically activated by lumenal H(+) and Cl(-). The allosteric requirement for H(+) efficiently prevents non-vesicular efflux across the plasma membrane. The L-glutamate uniporter activity exhibits a biphasic dependence on chloride concentration. Multifunctional transporter that transports L-glutamate as well as multiple ions such as chloride, proton, potassium, sodium and phosphate. At the synaptic vesicle membrane, mainly functions as a uniporter which transports preferentially L-glutamate but also, phosphate from the cytoplasm into synaptic vesicles at presynaptic nerve terminals of excitatory neural cells. The L-glutamate or phosphate uniporter activity is electrogenic and is driven by the proton electrochemical gradient, mainly by the electrical gradient established by the vacuolar H(+)-ATPase across the synaptic vesicle membrane. In addition, functions as a chloride channel that allows a chloride permeation through the synaptic vesicle membrane therefore affects the proton electrochemical gradient and promotes synaptic vesicles acidification. Moreover, functions as a vesicular K(+)/H(+) antiport allowing to maintain the electrical gradient and to decrease chemical gradient and therefore sustain vesicular glutamate uptake. The vesicular H(+)/H(+) antiport activity is electroneutral. At the plasma membrane, following exocytosis, functions as a symporter of Na(+) and phosphate from the extracellular space to the cytoplasm allowing synaptic phosphate homeostasis regulation. The symporter activity is driven by an inside negative membrane potential and is electrogenic. Also involved in the regulation of retinal hyaloid vessel regression during postnatal development. May also play a role in the endocrine glutamatergic system of other tissues such as pineal gland and pancreas. The polypeptide is Vesicular glutamate transporter 2 (Mus musculus (Mouse)).